Consider the following 476-residue polypeptide: MFRLNSLSALAELAVGSRWYHGGSQPIQIRRRLMMVAFLGASAVTASTGLLWKRAHAESPPCVDNLKSDIGDKGKNKDEGDVCNHEKKTADLAPHPEEKKKKRSGFRDRKVMEYENRIRAYSTPDKIFRYFATLKVISEPGEAEVFMTPEDFVRSITPNEKQPEHLGLDQYIIKRFDGKKISQEREKFADEGSIFYTLGECGLISFSDYIFLTTVLSTPQRNFEIAFKMFDLNGDGEVDMEEFEQVQSIIRSQTSMGMRHRDRPTTGNTLKSGLCSALTTYFFGADLKGKLTIKNFLEFQRKLQHDVLKLEFERHDPVDGRITERQFGGMLLAYSGVQSKKLTAMQRQLKKHFKEGKGLTFQEVENFFTFLKNINDVDTALSFYHMAGASLDKVTMQQVARTVAKVELSDHVCDVVFALFDCDGNGELSNKEFVSIMKQRLMRGLEKPKDMGFTRLMQAMWKCAQETAWDFALPKQ.

A mitochondrion-targeting transit peptide spans 1 to 33 (MFRLNSLSALAELAVGSRWYHGGSQPIQIRRRL). Positions 68–106 (SDIGDKGKNKDEGDVCNHEKKTADLAPHPEEKKKKRSGF) are disordered. The segment at 99 to 110 (KKKKRSGFRDRK) is polybasic region. Ser122 is modified (phosphoserine). The k/R-ring stretch occupies residues 126–129 (KIFR). The EF-hand 1 domain occupies 218 to 253 (TPQRNFEIAFKMFDLNGDGEVDMEEFEQVQSIIRSQ). Residues Asp231, Asn233, Asp235, Glu237, and Glu242 each contribute to the Ca(2+) site. Positions 259–263 (RHRDR) are k/R-ring. The EF-hand 2 domain occupies 408-443 (LSDHVCDVVFALFDCDGNGELSNKEFVSIMKQRLMR). 5 residues coordinate Ca(2+): Asp421, Asp423, Asn425, Glu427, and Glu432. Residue Arg455 is modified to Asymmetric dimethylarginine. A C-helix region region spans residues 455 to 465 (RLMQAMWKCAQ).

The protein belongs to the MICU1 family. MICU1 subfamily. In terms of assembly, heterodimer; disulfide-linked; heterodimerizes with MICU2 or MICU3. Homodimer; disulfide-linked. Component of the uniplex complex, composed of MCU, EMRE/SMDT1, MICU1 and MICU2 (or MICU3) in a 4:4:1:1 stoichiometry. The composition of calcium sensors within the uniplex complex can differ depending on tissues: a MICU1 homodimer can be present instead of the MICU1-MICU2 heterodimer in skeletal-muscle and kidney. MICU1 is recruited to the uniplex complex by EMRE/SMDT1, and it associates with MCU at low calcium levels, occluding the pore of the MCU channel. Associates with the MICOS complex. Interacts with SLC25A23. Interacts with CHCHD4/MIA40; which introduces the interchain disulfide bond with MICU2. Interacts (when methylated) with UCP2; leading to decrease the calcium sensitivity of MICU1. Post-translationally, phosphorylation at Ser-122 by AKT1 impairs its maturation and stability. In terms of processing, asymmetric dimethylation at Arg-455 by PRMT1 decreases the calcium sensitivity of MICU1 by promoting interaction with UCP2. Degraded by YME1L1 when not complexed as homodimer or heterodimer. Not degraded when complexed as homodimer or heterodimer; the presence of the interchain disulfide bond protecting MICU1 from degradation by YME1L1. As to expression, expressed in epithelial cell lines. Strongly expressed in epidermal keratinocytes and dermal endothelial cells.

It localises to the mitochondrion intermembrane space. The protein resides in the mitochondrion inner membrane. Its activity is regulated as follows. Activated by spermine, kaempferol and SB202190, which bind MICU1 and prevent MCU pore occlusion in absence of calcium. Functionally, calcium sensor of the mitochondrial calcium uniporter (MCU) channel, which senses calcium level via its EF-hand domains. MICU1 and MICU2 (or MICU3) form a disulfide-linked heterodimer that stimulates and inhibits MCU activity, depending on the concentration of calcium. At low calcium levels, MICU1 occludes the pore of the MCU channel, preventing mitochondrial calcium uptake. At higher calcium levels, calcium-binding to MICU1 and MICU2 (or MICU3) induces a conformational change that weakens MCU-MICU1 interactions and moves the MICU1-MICU2 heterodimer away from the pore, allowing calcium permeation through the MCU channel. Also required to protect against manganese toxicity by preventing manganese uptake by MCU: mechanistically, manganese-binding to its EF-hand domains does not induce any conformational change, maintaining MCU pore occlusion. Also acts as a barrier for inhibitors of the MCU channel, such as ruthenium red or its derivative Ru360. Acts as a regulator of mitochondrial cristae structure independently of its ability to regulate the mitochondrial calcium uniporter channel. Regulates glucose-dependent insulin secretion in pancreatic beta-cells by regulating mitochondrial calcium uptake. Induces T-helper 1-mediated autoreactivity, which is accompanied by the release of IFNG. Its function is as follows. Isoform that regulates mitochondrial calcium uniporter (MCU) in the skeletal muscle. Compared to other isoforms, this isoform has higher affinity for calcium, promoting mitochondrial calcium uptake at lower calcium concentrations. This allows a rapid response of mitochondrial metabolism and ensures sustained ATP production needed for resistance and strenuous exercise. This chain is Calcium uptake protein 1, mitochondrial, found in Homo sapiens (Human).